Here is a 438-residue protein sequence, read N- to C-terminus: MAQFFKPKKKASVNTKHLSVDVVRLDHNSAGIAFVDKKPVFIEGALPEEQAIIQFIEQKKQYSRAKLIKLTKKSSKRQAPICQHYDDCGGCNLQHLQHAEQIIAKNDKLQELMKKQGVDACDVAEPILANEHDYRRRARISLIMNKQTNQLDFGFRKKQSKEIVNVRHCPVLVKELDQHLESLYTLLNQLKGKRHLGHVELVQADNGSVLLIRHVAAFNEKDQQALLHYCEERDLILYLMPESDVLNHVYGEEPYYVIDEVKIYFTPKDFIQVNASINDSMVNQALTWLDLNADDCVLDLFCGLGNFSLPLAQKVKTVVGIEGVEEMVKRAQSNAKRNELDNVTFYQANLEEPIDQQVWASTKFTKILLDPARAGAAGVMQTVAKLKPETVVYVSCNPATLARDSQLLIQRGYKLTRLGMLDMFPHTGHLESMALFER.

In terms of domain architecture, TRAM spans 10–69 (KASVNTKHLSVDVVRLDHNSAGIAFVDKKPVFIEGALPEEQAIIQFIEQKKQYSRAKLIK). Residues Cys82, Cys88, Cys91, and Cys169 each contribute to the [4Fe-4S] cluster site. S-adenosyl-L-methionine-binding residues include Gln272, Phe301, Asn306, Glu322, Asn349, and Asp370. Residue Cys396 is the Nucleophile of the active site.

Belongs to the class I-like SAM-binding methyltransferase superfamily. RNA M5U methyltransferase family. RlmD subfamily.

The catalysed reaction is uridine(1939) in 23S rRNA + S-adenosyl-L-methionine = 5-methyluridine(1939) in 23S rRNA + S-adenosyl-L-homocysteine + H(+). Functionally, catalyzes the formation of 5-methyl-uridine at position 1939 (m5U1939) in 23S rRNA. The polypeptide is 23S rRNA (uracil(1939)-C(5))-methyltransferase RlmD (Aliivibrio salmonicida (strain LFI1238) (Vibrio salmonicida (strain LFI1238))).